We begin with the raw amino-acid sequence, 749 residues long: MFNEITKSVTWNGQVLELSTGKIARQADGAVTVKMGNSVLLCTAVVANKAKEGIGFLPLTINYREMAYAAGKIPGGFFKHEGKASDREVLVSRLIDRPIRPLFHPAFVNETHVTCSVLSYDPETPVDILAIIGASAALSLSPAPYLEIVAASKVGLINGEFVLNPTLALLKTSQLDLVVAGTSDSVMMVESEAHLLSEEQMLEAVKFGFESFQPVIKIIKELAEEAKKPKLEMQALYPASLKKEIEKLFVKEIEQAFAIKSKQERSTNLDLIPEKVLTHFVSDIENKKYSNYQIESALKAIESDILRNEILEKNRRIDGRSTTDIRQIACEIGLLPSAHGSALFTRGETQSLVSTTFGTSLDEQIVDSLEGEYKERFMLNYIFPPYSVNEAMPMKAPSRREVGHGKLAWRAINPILPNKVQFPYSIRVVAETTESNGSSSMATVCGSSLALMYAGVPIKAPVAGIAMGLVKEGKNFAVLSDILGDEDYFGDMDFKVAGTSEGITALQMDIKISGVDFKIMKVALEQARLGRLHILEQMNKVISKPNNELSKNAPSTTTIKIDKDKIRDIIGPGGKIIKEICETSGAKIDISDDGTVSVYASDRDKLKVALDKIKAIVVEPEIGEIFNGTVVKVLDSGAFINYVGNKDGFVHISEVSGERIETVSSVLKQGDIVKVKLIGFDNKGKAKLTIKNADKDKSSNNTKPKTNVNNTNKDNSEPEQRRDSSKKRAWNEDNNAETAEVITERKYFN.

Residues Asp-487 and Asp-493 each coordinate Mg(2+). Residues 554–613 (PSTTTIKIDKDKIRDIIGPGGKIIKEICETSGAKIDISDDGTVSVYASDRDKLKVALDKI) enclose the KH domain. The S1 motif domain maps to 623–691 (GEIFNGTVVK…NKGKAKLTIK (69 aa)). Positions 691-749 (KNADKDKSSNNTKPKTNVNNTNKDNSEPEQRRDSSKKRAWNEDNNAETAEVITERKYFN) are disordered. Over residues 699-713 (SNNTKPKTNVNNTNK) the composition is skewed to low complexity. A compositionally biased stretch (basic and acidic residues) spans 714 to 723 (DNSEPEQRRD).

Belongs to the polyribonucleotide nucleotidyltransferase family. It depends on Mg(2+) as a cofactor.

The protein localises to the cytoplasm. The enzyme catalyses RNA(n+1) + phosphate = RNA(n) + a ribonucleoside 5'-diphosphate. Involved in mRNA degradation. Catalyzes the phosphorolysis of single-stranded polyribonucleotides processively in the 3'- to 5'-direction. In Rickettsia conorii (strain ATCC VR-613 / Malish 7), this protein is Polyribonucleotide nucleotidyltransferase.